We begin with the raw amino-acid sequence, 293 residues long: ADP-forming sulfoacetate-CoA ligase subunit SauD (293 aa).

CoA contacts are provided by residues 17–20 (TGKE), lysine 43, and 96–98 (IAD). Residue histidine 251 is the Tele-phosphohistidine intermediate of the active site.

Belongs to the succinate/malate CoA ligase alpha subunit family. Forms a complex with SauC.

The enzyme catalyses sulfoacetate + ATP + CoA = sulfoacetyl-CoA + ADP + phosphate. Its function is as follows. Involved in the degradation of sulfoacetate. Catalyzes the CoA- and ATP-dependent conversion of sulfoacetate to sulfoacetyl-CoA and ADP. Cannot use other sulfonic and carboxylic acids, and shows only residual activity with 3-sulfopropanoate and malonic acid. This is ADP-forming sulfoacetate-CoA ligase subunit SauD from Bilophila wadsworthia (strain 3_1_6).